A 258-amino-acid chain; its full sequence is Global transcriptional regulator CodY (258 aa).

Residues 1–156 (MSSLLSKTRR…SATIVGMEML (156 aa)) form a GAF domain region. The H-T-H motif DNA-binding region spans 204 to 223 (ASKIADKVGITRSVIVNALR).

The protein belongs to the CodY family.

The protein localises to the cytoplasm. Functionally, DNA-binding global transcriptional regulator which is involved in the adaptive response to starvation and acts by directly or indirectly controlling the expression of numerous genes in response to nutrient availability. During rapid exponential growth, CodY is highly active and represses genes whose products allow adaptation to nutrient depletion. This Clostridium botulinum (strain Eklund 17B / Type B) protein is Global transcriptional regulator CodY.